We begin with the raw amino-acid sequence, 4293 residues long: Polycystin-1 (4293 aa).

The first 23 residues, 1–23, serve as a signal peptide directing secretion; the sequence is MPLGAPALLALALGLGLWLGALA. Residues 24–67 enclose the LRRNT domain; that stretch reads GDPGRGCGPCPLPCFCGPAPDAACRVNCSGRWLQTLGPSLRIPA. Over 24–3066 the chain is Extracellular; sequence GDPGRGCGPC…IFPEPSASIN (3043 aa). N-linked (GlcNAc...) asparagine glycosylation is found at N50 and N89. LRR repeat units follow at residues 68–91 and 92–113; these read DATALDLSHNLLQTLDIGLLVNLS and ALVELDLSNNRISTLEEGVFAN. N-linked (GlcNAc...) asparagine glycans are attached at residues N116 and N121. Positions 125-178 constitute an LRRCT domain; sequence NPFECNCGLAWLPRWAKEHQVHVVQSEATTCRGPIPLAGQPLLSIPLLDNACGE. Residues 177-271 form the WSC domain; the sequence is GEEYVACLPD…PTLLQHTFPA (95 aa). 2 N-linked (GlcNAc...) asparagine glycosylation sites follow: N187 and N239. The 88-residue stretch at 272-359 folds into the PKD 1 domain; sequence SPGATLVGPH…VQVEATPTVL (88 aa). N370 carries N-linked (GlcNAc...) asparagine glycosylation. Residues 415 to 530 enclose the C-type lectin domain; it reads GNGHCYRLVA…CSAPHSYVCE (116 aa). 2 disulfide bridges follow: C436/C529 and C507/C521. Residues 613–632 are disordered; sequence GGAAAVPEGSSEPDNRTEPA. N627 carries an N-linked (GlcNAc...) asparagine glycan. The 34-residue stretch at 633-666 folds into the LDL-receptor class A; atypical domain; the sequence is PKCVPEELWCPGANVCIPFDASCNSHVCINGSVS. 2 cysteine pairs are disulfide-bonded: C635-C648 and C642-C660. N662, N740, N804, N835, N848, N859, N884, N915, N998, N1004, N1028, N1084, N1096, N1107, N1172, N1188, N1234, N1263, N1330, N1342, N1376, N1444, N1449, N1468, N1535, N1548, N1557, N1643, N1657, N1706, N1730, N1788, N1831, N1863, and N1876 each carry an N-linked (GlcNAc...) asparagine glycan. 15 PKD domains span residues 849–922, 929–1014, 1017–1123, 1121–1209, 1207–1292, 1288–1377, 1376–1463, 1462–1545, 1544–1629, 1630–1718, 1716–1802, 1804–1886, 1885–1970, 1972–2053, and 2056–2144; these read ATAT…RVTA, LRAV…NKMH, WVSA…LPNV, PNVA…LHGL, HGLT…EVLH, LEVL…IRNI, NITL…VLVT, VTGI…VRGL, GLTI…IEGL, QVAG…VESL, ESLI…VGGL, IRTS…IVNL, NLML…VVGL, VPNC…MVEV, and IIQY…ACRE. N-linked (GlcNAc...) asparagine glycosylation is found at N1987, N2046, N2070, N2121, N2244, N2349, N2391, N2408, N2414, N2563, N2640, N2713, N2749, N2813, N2836, N2873, N2948, and N2986. Residues 2142–2828 form the REJ domain; that stretch reads CREPEVEVAL…QLIFLVDSNP (687 aa). The region spanning 2857-3055 is the GAIN-B domain; it reads PIEQLAAERA…SLFVPPSHVQ (199 aa). The cysteines at positions 3007 and 3035 are disulfide-linked. Positions 3007–3055 are GPS; sequence CQYFSEEMMMWRTEGIVPLEETSPSQAVCLTRHLTAFGASLFVPPSHVQ. A helical transmembrane segment spans residues 3067-3087; the sequence is YIVLLTCVICLVTYVVMAMIL. The Cytoplasmic portion of the chain corresponds to 3088–3269; the sequence is RKLDQLDVSR…DRPPRSRFTR (182 aa). One can recognise a PLAT domain in the interval 3110–3225; that stretch reads FKYEILVKTG…EANGGLVEKE (116 aa). The helical transmembrane segment at 3270–3290 threads the bilayer; the sequence is VQRVTCCVLLLCLFLAANAVW. The Extracellular portion of the chain corresponds to 3291–3315; it reads YGVVRDTTYSMGPVSSLISPGVDTV. A helical transmembrane segment spans residues 3316-3336; it reads AIGLVSSVVVYPVYLAVLFLF. Residues 3337–3549 lie on the Cytoplasmic side of the membrane; the sequence is RMSRSKVSGD…LPAWCAPLAH (213 aa). The helical transmembrane segment at 3550–3570 threads the bilayer; that stretch reads GLSLLLVAVAVAVSGWIGASF. The Extracellular portion of the chain corresponds to 3571–3572; the sequence is PP. A helical transmembrane segment spans residues 3573-3593; sequence SVSVMWLLSSSSSFLASFLGW. Residues 3594–3655 lie on the Cytoplasmic side of the membrane; the sequence is EPLKVLLEAL…LAKEEARKVK (62 aa). A helical transmembrane segment spans residues 3656-3676; sequence RLHDMLKRLLVYMLFLLVTLL. The Extracellular portion of the chain corresponds to 3677–3891; that stretch reads ANYGDASCHG…RLSTGLSLPL (215 aa). N-linked (GlcNAc...) asparagine glycosylation is found at N3728 and N3780. A helical membrane pass occupies residues 3892–3912; sequence LTSVCLLLFALYFSMAEVQTW. Residues 3913 to 3925 lie on the Cytoplasmic side of the membrane; it reads RKDGCACTARPDT. A helical membrane pass occupies residues 3926-3946; the sequence is WARCLLVILTAATGLVRLAQL. Topologically, residues 3947–3974 are extracellular; sequence GIADRQWTHFVQDHPRHFTSFDQVAQLG. The helical transmembrane segment at 3975 to 3995 threads the bilayer; it reads SVARGLAASLLFLLLVKAAQQ. Residues 3996–4017 lie on the Cytoplasmic side of the membrane; that stretch reads LRFVRQWSVFGKTLCRALPELM. Residues 4018–4038 form a helical membrane-spanning segment; it reads GATLGLVLLGVAYAQMAILLI. Topologically, residues 4039–4080 are extracellular; sequence SSGADTLYNMARAFLVLCPGARVPTLCPSESWYLSPLLCVGL. Residues 4081–4100 form a helical membrane-spanning segment; the sequence is WALRVWGALRLGAILLRWRY. The Cytoplasmic segment spans residues 4101 to 4293; the sequence is HALRGELYRP…PNNKVHPSST (193 aa). Disordered regions lie at residues 4150-4197 and 4235-4293; these read PLPS…STLK and SLQG…PSST. Low complexity predominate over residues 4153–4172; that stretch reads SRSSRGSKSSPVVLPPSSGS. A Phosphoserine; by PRKX; in vitro modification is found at S4156. Residues 4173–4195 show a composition bias toward polar residues; sequence EASHPSTSSSQPDGPSASLSRST. Residues 4210–4241 are a coiled coil; that stretch reads ESLLVQFDRLNQATEDVYQLEQQLQSLQGHGH. Low complexity predominate over residues 4238-4256; sequence GHGHNGPPSSPSPGCFPGS. Residues 4265-4276 are compositionally biased toward polar residues; sequence SRASQGLDQTVG.

Belongs to the polycystin family. Component of the heterotetrameric polycystin channel complex with PKD2; the tetramer contains one PKD1 chain and three PKD2 chains. Interacts with PKD2; the interaction is required for ciliary localization. Interacts with PKD2L1. Interacts with PRKX; involved in differentiation and controlled morphogenesis of the kidney. Interacts (via extracellular domain) with WNT3A, WNT4 and WNT9B. Interacts with WNT5A, DVL1 and DVL2. Interacts with NPHP1 (via SH3 domain). Interacts with BBS1, BBS4, BBS5 and TTC8. Interacts with RGS7. Interacts (via C-terminal domain) with RABEP1; the interaction connects PKD1:PKD2 to GGA1 and ARL3 that mediate the ciliary targeting. Interacts (via the PKD repeats in the N-terminal extracellular region) with EPCIP; the interaction is not dependent on N-glycosylation of either protein. In terms of processing, N-glycosylated. Post-translationally, after synthesis, undergoes autoproteolytic cleavage between Leu-3040 and Thr-3041 in the GPS region of the GAIN-B domain. Cleavage at the GPS region occurs through a cis-autoproteolytic mechanism involving an ester-intermediate via N-O acyl rearrangement. This process takes place in the early secretory pathway, depends on initial N-glycosylation, and requires the REJ domain. PKD1 is ubiquitously and incompletely cleaved in wild-type mice, so that uncleaved and cleaved PKD1 molecules coexist. The differential patterns of cleavage during embryonic development, as well as in adult mice, suggest different functions of uncleaved and cleaved molecules.

Its subcellular location is the cell membrane. It localises to the cell projection. The protein resides in the cilium. It is found in the endoplasmic reticulum. The protein localises to the golgi apparatus. Its subcellular location is the vesicle. It localises to the secreted. The protein resides in the extracellular exosome. Component of a heteromeric calcium-permeable ion channel formed by PKD1 and PKD2 that is activated by interaction between PKD1 and a Wnt family member, such as WNT3A and WNT9B. Both PKD1 and PKD2 are required for channel activity. Involved in renal tubulogenesis. Involved in fluid-flow mechanosensation by the primary cilium in renal epithelium. Acts as a regulator of cilium length, together with PKD2. The dynamic control of cilium length is essential in the regulation of mechanotransductive signaling. The cilium length response creates a negative feedback loop whereby fluid shear-mediated deflection of the primary cilium, which decreases intracellular cAMP, leads to cilium shortening and thus decreases flow-induced signaling. May be an ion-channel regulator. Involved in adhesive protein-protein and protein-carbohydrate interactions. Likely to be involved with polycystin-1-interacting protein 1 in the detection, sequestration and exocytosis of senescent mitochondria. This is Polycystin-1 from Mus musculus (Mouse).